The following is a 403-amino-acid chain: Tubby-like F-box protein 6 (403 aa).

The 56-residue stretch at 50-105 folds into the F-box domain; that stretch reads SCWAQLPPELLREVLVRIEESEVWWPSRRDVVACAGVCRSWRGITKEIVRVPEASG.

The protein belongs to the TUB family. Ubiquitous.

The sequence is that of Tubby-like F-box protein 6 (TULP6) from Oryza sativa subsp. japonica (Rice).